The sequence spans 297 residues: MGERANFLKGEVRKKFEAAAMSAIDAAMLVDAVVHLGIDHCFREEIATALRSVHEDEEGEFGSCDDLHTVAVRFLVLRQHGLWVSADVFDKFRDDKGSFSKSLLCSNPRGLLSLYNAAHMAVTPEEKVLDDAIAFARSHLVEAMIGELRSPMVEQVSRSFDIPLPRFSRRLESMHYIAEYGQEEEGHDAQILELARLEFELVRSLHLRELREICSAEYGATGEEAFAFIANMTENAWRKINQACMEMDPAMLPAFKVAVVDLSRSIEIIYLGGKRDAYTFGSNLKDLVTSLFLKPCA.

It belongs to the terpene synthase family. As to quaternary structure, monomer.

It is found in the cytoplasm. Its function is as follows. Inactive selinene synthase. The chain is Inactive beta selinene synthase from Zea mays (Maize).